A 440-amino-acid chain; its full sequence is Tyrosine--tRNA ligase (440 aa).

Y46 is a binding site for L-tyrosine. Residues 51-60 carry the 'HIGH' region motif; it reads PTAPSLHIGN. L-tyrosine-binding residues include Y181 and Q185. A 'KMSKS' region motif is present at residues 241 to 245; sequence KFGKS. K244 is a binding site for ATP. Residues 373 to 430 form the S4 RNA-binding domain; that stretch reads DRIAQAGVSAGLFKSISEARKTIKSGGVYVNNVRVEDEEQLLGDGDFLKGRFVVLRRG.

The protein belongs to the class-I aminoacyl-tRNA synthetase family. TyrS type 1 subfamily. In terms of assembly, homodimer.

It localises to the cytoplasm. It carries out the reaction tRNA(Tyr) + L-tyrosine + ATP = L-tyrosyl-tRNA(Tyr) + AMP + diphosphate + H(+). In terms of biological role, catalyzes the attachment of tyrosine to tRNA(Tyr) in a two-step reaction: tyrosine is first activated by ATP to form Tyr-AMP and then transferred to the acceptor end of tRNA(Tyr). The protein is Tyrosine--tRNA ligase of Bifidobacterium animalis subsp. lactis (strain AD011).